The following is a 1127-amino-acid chain: MTSLYGRHAEKTTDMPKPSAPKVHVQRSVSRDTIAIHFSASGEEEEEEEEEFREYFEEGLDDQSIVTGLEAKEDLYLEPQVGHDPAGPAASPVLADGLSVSQAPAILPVSKNTVKLLESPVPAAQVLSTVPLAVSPGSSSSGPLASSPSVSSLSEQKTSSSSPLSSPSKSPILSSSASTSTLSSAKPFMSLVKSLSTEVEPKESPHPARHRHLMKTLVKSLSTDTSRQESDTVSYKPPDSKLNLHLFKQFTQPRNTGGDSKTAPSSPLTSPSDTRSFFKVPEMEAKIEDTKRRLSEVIYEPFQLLSKIIGEESGSHRPKALSSSASELSNLSSLNGHLESNNNYSIKEEECDSEGDGYGSDSNIPRSDHPKSTGEPTREIELKSSQGSSLKDLGLKTSSLVLEKCSLSALVSKEDEEFCELYTEDFDLETEGESKVDKLSDIPLKPEVLAEDGVVLDSEDEVDSAVQHPELPVKTLGFFIMCVYVYLILPLPHYVSGLFLGIGLGFMTAVCVIWFFTPPSAHKYHKLHKNLRHWNTRSLDIKEPEILKGWMNEIYNYDPETYHATLTHSVFVRLEGGTLRLSKPNKNISRRASYNEPKPEVTYISQKIYDLSDSKIYLVPKTLARKRIWNKKYPICIELGQQDDFMSKAQTDKETSEEKPPAEGSEDPKKPPRPQEGTRSSQRDQILYLFGRTGREKEEWFRRFILASKLKSEIKKSSGVSGGKPGLLPAHSRHNSPSGHLTHSRSSSKGSVEEIMSQPKQKELAGSVRQKMLLDYSVYMGRCVPQESRSPQRSPLQSAESSPTAGKKLPEVPPSEEEEQEAWVNALLGRIFWDFLGEKYWSDLVSKKIQMKLSKIKLPYFMNELTLTELDMGVAVPKILQAFKPYVDHQGLWIDLEMSYNGSFLMTLETKMNLTKLGKEPLVEALKVGEIGKEGCRPRAFCLADSDEESSSAGSSEEDDAPEPSGGDKQLLPGAEGYVGGHRTSKIMRFVDKITKSKYFQKATETEFIKKKIEEVSNTPLLLTVEVQECRGTLAVNIPPPPTDRVWYGFRKPPHVELKARPKLGEREVTLVHVTDWIEKKLEQEFQKVFVMPNMDDVYITIMHSAMDPRSTSCLLKDPPVEAADQP.

2 disordered regions span residues 1-27 (MTSLYGRHAEKTTDMPKPSAPKVHVQR) and 133-279 (AVSP…SFFK). A compositionally biased stretch (low complexity) spans 133 to 187 (AVSPGSSSSGPLASSPSVSSLSEQKTSSSSPLSSPSKSPILSSSASTSTLSSAKP). Phosphoserine is present on Ser-196. Residues 249–275 (QFTQPRNTGGDSKTAPSSPLTSPSDTR) are compositionally biased toward polar residues. Thr-262 is modified (phosphothreonine). 4 positions are modified to phosphoserine: Ser-265, Ser-266, Ser-270, and Ser-295. A glycan (N-linked (GlcNAc...) asparagine) is linked at Asn-330. Positions 348-386 (EEECDSEGDGYGSDSNIPRSDHPKSTGEPTREIELKSSQ) are disordered. The segment covering 366–382 (RSDHPKSTGEPTREIEL) has biased composition (basic and acidic residues). A run of 2 helical transmembrane segments spans residues 475 to 495 (TLGFFIMCVYVYLILPLPHYV) and 497 to 517 (GLFLGIGLGFMTAVCVIWFFT). 4 disordered regions span residues 648 to 685 (KAQTDKETSEEKPPAEGSEDPKKPPRPQEGTRSSQRDQ), 715 to 764 (KKSS…QKEL), 786 to 816 (QESRSPQRSPLQSAESSPTAGKKLPEVPPSE), and 947 to 980 (DEESSSAGSSEEDDAPEPSGGDKQLLPGAEGYVG). Residues 650–670 (QTDKETSEEKPPAEGSEDPKK) are compositionally biased toward basic and acidic residues. A phosphoserine mark is found at Ser-732, Ser-738, Ser-744, Ser-748, Ser-751, Ser-798, and Ser-815. The span at 735-750 (NSPSGHLTHSRSSSKG) shows a compositional bias: polar residues. Residues 787-804 (ESRSPQRSPLQSAESSPT) show a composition bias toward polar residues. Residues 816–1101 (EEEEQEAWVN…MPNMDDVYIT (286 aa)) enclose the SMP-LTD domain. Over residues 947–962 (DEESSSAGSSEEDDAP) the composition is skewed to acidic residues.

The protein localises to the endoplasmic reticulum membrane. Its subcellular location is the nucleus membrane. Functionally, during endoplasmic reticulum (ER) stress or when cellular ceramide levels increase, may induce contacts between the ER and medial-Golgi complex to facilitate non-vesicular transport of ceramides from the ER to the Golgi complex where they are converted to complex sphingolipids, preventing toxic ceramide accumulation. This Homo sapiens (Human) protein is Testis-expressed protein 2 (TEX2).